We begin with the raw amino-acid sequence, 286 residues long: MASLRDIKAKITSTKKTSQITKAMEMVSASKLNRAEQNAKSFVPYMEKIQEVVASIAQGSKGINHPMLNARPVKRTGYIVITSDRGLAGGYNSNVLRTVSNVIRERHNMDSNQYSIIVLGRLGRDYLKRRGFNIIDEVVGLSDHPSFTDIKDLASRAIAMFADGAYDELYIYYNHYVSKISQEVTENKILPLTDVASDKPTTAYEFEPSEEEILKVLLPQYAESLVYGALLDGKASEHAARMTAMKSATDNAMEVIDSLTLSFNRARQAAITQEITEIVGGAAALE.

Belongs to the ATPase gamma chain family. In terms of assembly, F-type ATPases have 2 components, CF(1) - the catalytic core - and CF(0) - the membrane proton channel. CF(1) has five subunits: alpha(3), beta(3), gamma(1), delta(1), epsilon(1). CF(0) has three main subunits: a, b and c.

The protein resides in the cell membrane. In terms of biological role, produces ATP from ADP in the presence of a proton gradient across the membrane. The gamma chain is believed to be important in regulating ATPase activity and the flow of protons through the CF(0) complex. The polypeptide is ATP synthase gamma chain (Bacillus cereus (strain G9842)).